Here is a 126-residue protein sequence, read N- to C-terminus: Probable V-type proton ATPase subunit G (126 aa).

Residues 23–45 (NEARKRKLQRTKQAKQEAQAEVE) are disordered. Residues 26–35 (RKRKLQRTKQ) show a composition bias toward basic residues.

This sequence belongs to the V-ATPase G subunit family. V-ATPase is a heteromultimeric enzyme made up of two complexes: the ATP-hydrolytic V1 complex and the proton translocation V0 complex. The V1 complex consists of three catalytic AB heterodimers that form a heterohexamer, three peripheral stalks each consisting of EG heterodimers, one central rotor including subunits D and F, and the regulatory subunits C and H. The proton translocation complex V0 consists of the proton transport subunit a, a ring of proteolipid subunits c9c'', rotary subunit d, subunits e and f, and the accessory subunits vah-19/Ac45 and vah-20/PRR.

Its function is as follows. Subunit of the V1 complex of vacuolar(H+)-ATPase (V-ATPase), a multisubunit enzyme composed of a peripheral complex (V1) that hydrolyzes ATP and a membrane integral complex (V0) that translocates protons. V-ATPase is responsible for acidifying and maintaining the pH of intracellular compartments and in some cell types, is targeted to the plasma membrane, where it is responsible for acidifying the extracellular environment. In neurons, required for necrotic cell death by promoting intracellular acidification. The sequence is that of Probable V-type proton ATPase subunit G from Caenorhabditis briggsae.